We begin with the raw amino-acid sequence, 356 residues long: Uroporphyrinogen decarboxylase (356 aa).

Substrate contacts are provided by residues 27–31 (RQAGR), Asp-77, Tyr-154, Thr-209, and His-327.

Belongs to the uroporphyrinogen decarboxylase family. Homodimer.

The protein localises to the cytoplasm. It carries out the reaction uroporphyrinogen III + 4 H(+) = coproporphyrinogen III + 4 CO2. The protein operates within porphyrin-containing compound metabolism; protoporphyrin-IX biosynthesis; coproporphyrinogen-III from 5-aminolevulinate: step 4/4. Catalyzes the decarboxylation of four acetate groups of uroporphyrinogen-III to yield coproporphyrinogen-III. In Cellvibrio japonicus (strain Ueda107) (Pseudomonas fluorescens subsp. cellulosa), this protein is Uroporphyrinogen decarboxylase.